Here is a 450-residue protein sequence, read N- to C-terminus: Phosphoglucosamine mutase (450 aa).

Ser-101 (phosphoserine intermediate) is an active-site residue. Mg(2+) contacts are provided by Ser-101, Asp-242, Asp-244, and Asp-246. Ser-101 carries the phosphoserine modification.

Belongs to the phosphohexose mutase family. Requires Mg(2+) as cofactor. Post-translationally, activated by phosphorylation.

It carries out the reaction alpha-D-glucosamine 1-phosphate = D-glucosamine 6-phosphate. Its function is as follows. Catalyzes the conversion of glucosamine-6-phosphate to glucosamine-1-phosphate. This Rhodopseudomonas palustris (strain HaA2) protein is Phosphoglucosamine mutase.